Here is a 318-residue protein sequence, read N- to C-terminus: MWKRLLIVSAVSAAMSSMALAAPLTVGFSQVGSESGWRAAETNVAKSEAEKRGITLKIADGQQKQENQIKAVRSFVAQGVDAIFIAPVVATGWEPVLKEAKDAEIPVFLLDRSIDVKDKSLYMTTVTADNILEGKLIGDWLVKEVNGKPCNVVELQGTVGASVAIDRKKGFAEAIKNAPNIKIIRSQSGDFTRSKGKEVMESFIKAENNGKNICMVYAHNDDMVIGAIQAIKEAGLKPGKDILTGSIDGVPDIYKAMMDGEANASVELTPNMAGPAFDALEKYKKDGTMPEKLTLTKSTLYLPDTAKEELEKKKNMGY.

Positions 1–21 (MWKRLLIVSAVSAAMSSMALA) are cleaved as a signal peptide. Beta-D-galactofuranose is bound by residues 34–38 (ESGWR), 111–112 (DR), Arg167, Asn220, and Asp248. Cys150 and Cys214 form a disulfide bridge.

This sequence belongs to the bacterial solute-binding protein 2 family. As to quaternary structure, the complex is composed of two ATP-binding proteins (YtfR), two transmembrane proteins (YtfT and YjfF) and a solute-binding protein (YtfQ).

It is found in the periplasm. Part of the ABC transporter complex YtfQRT-YjfF involved in galactofuranose transport. Binds to both alpha- and beta-galactofuranose. This chain is Galactofuranose-binding protein YtfQ (ytfQ), found in Escherichia coli (strain K12).